The sequence spans 376 residues: MAASRDADEIHKDVQNYYGNVLKTSADLQTNACVTRAKPVPSYIRESLQNVHEDVSSRYYGCGLTVPERLENCRILDLGSGSGRDCYVLSQLVGEKGHVTGIDMTEVQVEVAKTYLEHHMEKFGFQAPNVTFLHGRIEKLAEAGIQSESYDIVISNCVINLVPDKQQVLQEVYRVLKHGGELYFSDVYASLEVPEDIKSHKVLWGECLGGALYWKDLAIIAQKIGFCPPRLVTADIITVENKELEGVLGDCRFVSATFRLFKLPKTEPAERCRVVYNGGIKGHEKELIFDANFTFKEGEAVAVDEETAAVLKNSRFAPDFLFTPVDASLPAPQGRSELETKVLIRDPFKLAEDSDKMKPRHAPEGTGGCCGKRKNC.

Phosphoserine is present on residues Ser47 and Ser336. The segment covering 354–363 (SDKMKPRHAP) has biased composition (basic and acidic residues). Positions 354–376 (SDKMKPRHAPEGTGGCCGKRKNC) are disordered.

This sequence belongs to the methyltransferase superfamily. Arsenite methyltransferase family.

The protein resides in the cytoplasm. It is found in the cytosol. The enzyme catalyses arsenic triglutathione + [thioredoxin]-dithiol + S-adenosyl-L-methionine + 2 H2O = methylarsonous acid + [thioredoxin]-disulfide + 3 glutathione + S-adenosyl-L-homocysteine + H(+). It carries out the reaction arsenic triglutathione + 2 [thioredoxin]-dithiol + 2 S-adenosyl-L-methionine + H2O = dimethylarsinous acid + 2 [thioredoxin]-disulfide + 3 glutathione + 2 S-adenosyl-L-homocysteine + 2 H(+). The catalysed reaction is arsenic triglutathione + 3 [thioredoxin]-dithiol + 3 S-adenosyl-L-methionine = trimethylarsine + 3 [thioredoxin]-disulfide + 3 glutathione + 3 S-adenosyl-L-homocysteine + 3 H(+). Functionally, catalyzes the transfer of a methyl group from AdoMet to trivalent arsenicals producing methylated and dimethylated arsenicals. It methylates arsenite to form methylarsonate, Me-AsO(3)H(2), which is reduced by methylarsonate reductase to methylarsonite, Me-As(OH)2. Methylarsonite is also a substrate and it is converted into the much less toxic compound dimethylarsinate (cacodylate), Me(2)As(O)-OH. In Mus musculus (Mouse), this protein is Arsenite methyltransferase (As3mt).